Consider the following 130-residue polypeptide: Histone H2A type 1-F (130 aa).

The disordered stretch occupies residues 1 to 22 (MSGRGKQGGKARAKAKTRSSRA). S2 is modified (phosphoserine; by RPS6KA5). R4 carries the post-translational modification Citrulline; alternate. Position 4 is a symmetric dimethylarginine; by PRMT5; alternate (R4). N6-(2-hydroxyisobutyryl)lysine occurs at positions 6 and 10. Positions 7-19 (QGGKARAKAKTRS) are enriched in basic residues. Residue K10 is modified to N6-lactoyllysine; alternate. K37 bears the N6-(2-hydroxyisobutyryl)lysine; alternate mark. Position 37 is an N6-(beta-hydroxybutyryl)lysine; alternate (K37). The residue at position 37 (K37) is an N6-crotonyllysine; alternate. 3 positions are modified to N6-(2-hydroxyisobutyryl)lysine: K75, K76, and K96. N6-glutaryllysine; alternate is present on K96. Q105 bears the N5-methylglutamine mark. At K119 the chain carries N6-(2-hydroxyisobutyryl)lysine; alternate. N6-crotonyllysine; alternate occurs at positions 119 and 120. N6-glutaryllysine; alternate is present on residues K119 and K120. A Glycyl lysine isopeptide (Lys-Gly) (interchain with G-Cter in ubiquitin); alternate cross-link involves residue K120. T121 carries the phosphothreonine; by DCAF1 modification. K126 bears the N6-crotonyllysine; alternate mark. K126 is subject to N6-glutaryllysine; alternate.

This sequence belongs to the histone H2A family. In terms of assembly, the nucleosome is a histone octamer containing two molecules each of H2A, H2B, H3 and H4 assembled in one H3-H4 heterotetramer and two H2A-H2B heterodimers. The octamer wraps approximately 147 bp of DNA. Deiminated on Arg-4 in granulocytes upon calcium entry. In terms of processing, monoubiquitination of Lys-120 (H2AK119Ub) by RING1, TRIM37 and RNF2/RING2 complex gives a specific tag for epigenetic transcriptional repression and participates in X chromosome inactivation of female mammals. It is involved in the initiation of both imprinted and random X inactivation. Ubiquitinated H2A is enriched in inactive X chromosome chromatin. Ubiquitination of H2A functions downstream of methylation of 'Lys-27' of histone H3 (H3K27me). H2AK119Ub by RNF2/RING2 can also be induced by ultraviolet and may be involved in DNA repair. Following DNA double-strand breaks (DSBs), it is ubiquitinated through 'Lys-63' linkage of ubiquitin moieties by the E2 ligase UBE2N and the E3 ligases RNF8 and RNF168, leading to the recruitment of repair proteins to sites of DNA damage. Ubiquitination at Lys-14 and Lys-16 (H2AK13Ub and H2AK15Ub, respectively) in response to DNA damage is initiated by RNF168 that mediates monoubiquitination at these 2 sites, and 'Lys-63'-linked ubiquitin are then conjugated to monoubiquitin; RNF8 is able to extend 'Lys-63'-linked ubiquitin chains in vitro. H2AK119Ub and ionizing radiation-induced 'Lys-63'-linked ubiquitination (H2AK13Ub and H2AK15Ub) are distinct events. Post-translationally, phosphorylation on Ser-2 (H2AS1ph) is enhanced during mitosis. Phosphorylation on Ser-2 by RPS6KA5/MSK1 directly represses transcription. Acetylation of H3 inhibits Ser-2 phosphorylation by RPS6KA5/MSK1. Phosphorylation at Thr-121 (H2AT120ph) by DCAF1 is present in the regulatory region of many tumor suppresor genes and down-regulates their transcription. Symmetric dimethylation on Arg-4 by the PRDM1/PRMT5 complex may play a crucial role in the germ-cell lineage. In terms of processing, glutamine methylation at Gln-105 (H2AQ104me) by FBL is specifically dedicated to polymerase I. It is present at 35S ribosomal DNA locus and impairs binding of the FACT complex. Post-translationally, crotonylation (Kcr) is specifically present in male germ cells and marks testis-specific genes in post-meiotic cells, including X-linked genes that escape sex chromosome inactivation in haploid cells. Crotonylation marks active promoters and enhancers and confers resistance to transcriptional repressors. It is also associated with post-meiotically activated genes on autosomes. Lactylated in macrophages by EP300/P300 by using lactoyl-CoA directly derived from endogenous or exogenous lactate, leading to stimulates gene transcription.

The protein localises to the nucleus. It is found in the chromosome. In terms of biological role, core component of nucleosome. Nucleosomes wrap and compact DNA into chromatin, limiting DNA accessibility to the cellular machineries which require DNA as a template. Histones thereby play a central role in transcription regulation, DNA repair, DNA replication and chromosomal stability. DNA accessibility is regulated via a complex set of post-translational modifications of histones, also called histone code, and nucleosome remodeling. In Rattus norvegicus (Rat), this protein is Histone H2A type 1-F.